A 572-amino-acid chain; its full sequence is Serine/threonine-protein kinase pak-1 (572 aa).

Disordered regions lie at residues Met1–Ser71 and Gln156–Pro195. The CRIB domain occupies Ile67–Gly80. Residues Tyr81–Lys294 form a linker region. Residues Pro178 to Pro195 are compositionally biased toward polar residues. The Protein kinase domain maps to Tyr295–Leu546. ATP-binding positions include Ile301–Val309 and Lys324. Catalysis depends on Asp414, which acts as the Proton acceptor.

The protein belongs to the protein kinase superfamily. STE Ser/Thr protein kinase family. STE20 subfamily. In terms of assembly, interacts with cdc-42 (GTP-bound form) and cedd-10 (GTP-bound form). Mg(2+) is required as a cofactor. It depends on Mn(2+) as a cofactor. Specifically colocalized with cdc-42 and ced-10 at all hypodermal cell boundaries during embryo elongation throughout the second phase of embryogenesis. Expressed mainly in pharyngeal muscles, the CAN neurons, motor neurons in the ventral nerve cord, several cells in the tail region (including the B and Y cells from L1 to adult, the hypodermal blast cell T in the L1 and some of its progeny in later stages), and the distal tip cells.

The protein resides in the cell membrane. The protein localises to the cytoplasm. It is found in the cell projection. Its subcellular location is the axon. It localises to the perikaryon. The enzyme catalyses L-seryl-[protein] + ATP = O-phospho-L-seryl-[protein] + ADP + H(+). It catalyses the reaction L-threonyl-[protein] + ATP = O-phospho-L-threonyl-[protein] + ADP + H(+). Its function is as follows. Required for hypodermal cell fusion, together with cdc-42 and ced-10, leading to embryonic body elongation, which involves dramatic cytoskeletal reorganization. Plays a redundant role with max-2 in dorsal axonal guidance in ventral cord commissural motoneurons and in P neuroblast migration. Acts probably downstream of Rho GTPases mig-2 and ced-10 to regulate these 2 processes. Involved in orientating axonal growth of HSN neurons. During gonad morphogenesis and probably in association with pix-1 and git-1, involved in the migration of distal tip cell (DTC) and in maintaining their sharp tapering morphology. In addition, plays a redundant role with max-2 in DTC-mediated guidance of gonad elongation. May phosphorylate mlc-4. The protein is Serine/threonine-protein kinase pak-1 (pak-1) of Caenorhabditis elegans.